Here is a 547-residue protein sequence, read N- to C-terminus: TBCC domain-containing protein 1 (547 aa).

Positions 304–435 (PHTHRMVVMS…LEDHMAHTGL (132 aa)) constitute a C-CAP/cofactor C-like domain.

It belongs to the TBCC family.

It is found in the cytoplasm. It localises to the cytoskeleton. Its subcellular location is the microtubule organizing center. The protein localises to the centrosome. The protein resides in the spindle pole. Its function is as follows. May play a role in the regulation of centrosome and Golgi apparatus positioning. This is TBCC domain-containing protein 1 (tbccd1) from Xenopus tropicalis (Western clawed frog).